A 378-amino-acid chain; its full sequence is Anhydro-N-acetylmuramic acid kinase (378 aa).

9 to 16 (GTSADGID) is an ATP binding site.

This sequence belongs to the anhydro-N-acetylmuramic acid kinase family.

It carries out the reaction 1,6-anhydro-N-acetyl-beta-muramate + ATP + H2O = N-acetyl-D-muramate 6-phosphate + ADP + H(+). The protein operates within amino-sugar metabolism; 1,6-anhydro-N-acetylmuramate degradation. It functions in the pathway cell wall biogenesis; peptidoglycan recycling. Catalyzes the specific phosphorylation of 1,6-anhydro-N-acetylmuramic acid (anhMurNAc) with the simultaneous cleavage of the 1,6-anhydro ring, generating MurNAc-6-P. Is required for the utilization of anhMurNAc either imported from the medium or derived from its own cell wall murein, and thus plays a role in cell wall recycling. In Synechococcus sp. (strain ATCC 27144 / PCC 6301 / SAUG 1402/1) (Anacystis nidulans), this protein is Anhydro-N-acetylmuramic acid kinase.